The sequence spans 222 residues: Probable transaldolase (222 aa).

Lys-91 (schiff-base intermediate with substrate) is an active-site residue.

Belongs to the transaldolase family. Type 3B subfamily.

Its subcellular location is the cytoplasm. It carries out the reaction D-sedoheptulose 7-phosphate + D-glyceraldehyde 3-phosphate = D-erythrose 4-phosphate + beta-D-fructose 6-phosphate. Its pathway is carbohydrate degradation; pentose phosphate pathway; D-glyceraldehyde 3-phosphate and beta-D-fructose 6-phosphate from D-ribose 5-phosphate and D-xylulose 5-phosphate (non-oxidative stage): step 2/3. Transaldolase is important for the balance of metabolites in the pentose-phosphate pathway. The protein is Probable transaldolase of Chlorobaculum parvum (strain DSM 263 / NCIMB 8327) (Chlorobium vibrioforme subsp. thiosulfatophilum).